We begin with the raw amino-acid sequence, 265 residues long: 3-methyl-2-oxobutanoate hydroxymethyltransferase (265 aa).

Mg(2+) is bound by residues Asp45 and Asp84. 3-methyl-2-oxobutanoate contacts are provided by residues 45–46, Asp84, and Lys112; that span reads DS. Glu114 lines the Mg(2+) pocket. The active-site Proton acceptor is the Glu181.

It belongs to the PanB family. In terms of assembly, homodecamer; pentamer of dimers. It depends on Mg(2+) as a cofactor.

It is found in the cytoplasm. The catalysed reaction is 3-methyl-2-oxobutanoate + (6R)-5,10-methylene-5,6,7,8-tetrahydrofolate + H2O = 2-dehydropantoate + (6S)-5,6,7,8-tetrahydrofolate. Its pathway is cofactor biosynthesis; (R)-pantothenate biosynthesis; (R)-pantoate from 3-methyl-2-oxobutanoate: step 1/2. Functionally, catalyzes the reversible reaction in which hydroxymethyl group from 5,10-methylenetetrahydrofolate is transferred onto alpha-ketoisovalerate to form ketopantoate. This chain is 3-methyl-2-oxobutanoate hydroxymethyltransferase, found in Yersinia pseudotuberculosis serotype O:1b (strain IP 31758).